Reading from the N-terminus, the 279-residue chain is MYDLTGKHVCYVADCGGIALETSKVLMTKNIAKLAVLQSVENQPAIAQLQSIKHSTQIFFWTFDVTMARQEMKKYFDEVMVQMDYIDVLINGATLCDERNIDATINTNLTGMMNTVATVLPYMDRKMGGSGGLIVNVTSVIGLDPSPVFCAYSASKFGVIGFTRSLADPLYYTQNGVAVMAVCCGPTKVFVDRELNAFLEYGQTFADRLRCAPCQSTASCGQNIVTAIERSENGQIWIADKGGLEMVTLHWYWHMADQFLSYMQSTDDDNQEQFVSGRR.

An NAD(+)-binding site is contributed by 11–34 (YVADCGGIALETSKVLMTKNIAKL). Residue S139 participates in substrate binding. Residue Y152 is the Proton acceptor of the active site.

Belongs to the short-chain dehydrogenases/reductases (SDR) family.

The polypeptide is Alcohol dehydrogenase-related 31 kDa protein (Adhr) (Drosophila guanche (Fruit fly)).